A 1254-amino-acid chain; its full sequence is DNA-directed RNA polymerase subunit beta' (1254 aa).

Residues cysteine 59, cysteine 61, cysteine 76, and cysteine 79 each coordinate Zn(2+). Residues aspartate 501, aspartate 503, and aspartate 505 each coordinate Mg(2+). Positions 871, 946, 953, and 956 each coordinate Zn(2+).

The protein belongs to the RNA polymerase beta' chain family. In terms of assembly, the RNAP catalytic core consists of 2 alpha, 1 beta, 1 beta' and 1 omega subunit. When a sigma factor is associated with the core the holoenzyme is formed, which can initiate transcription. Mg(2+) is required as a cofactor. It depends on Zn(2+) as a cofactor.

It catalyses the reaction RNA(n) + a ribonucleoside 5'-triphosphate = RNA(n+1) + diphosphate. In terms of biological role, DNA-dependent RNA polymerase catalyzes the transcription of DNA into RNA using the four ribonucleoside triphosphates as substrates. The protein is DNA-directed RNA polymerase subunit beta' of Mesoplasma florum (strain ATCC 33453 / NBRC 100688 / NCTC 11704 / L1) (Acholeplasma florum).